The chain runs to 249 residues: Transmembrane protein 51 (249 aa).

The next 2 membrane-spanning stretches (helical) occupy residues 17–37 (IGLG…VPGF) and 64–84 (VAYV…CLSI). 3 disordered regions span residues 95–126 (ELAR…SRYY), 161–199 (TGLD…PLKV), and 213–249 (RITL…RPPD). The segment covering 99-108 (IQQQAGTVPH) has biased composition (polar residues). Phosphoserine occurs at positions 109, 114, 178, and 188. The segment covering 167–178 (TPTSTRAETETS) has biased composition (polar residues). Over residues 190–199 (LAKRLKPLKV) the composition is skewed to basic residues. The segment covering 220-234 (NVPPPSIEPLTPPPL) has biased composition (pro residues).

Its subcellular location is the membrane. This chain is Transmembrane protein 51 (Tmem51), found in Mus musculus (Mouse).